We begin with the raw amino-acid sequence, 223 residues long: Enolase-phosphatase E1 (223 aa).

The protein belongs to the HAD-like hydrolase superfamily. MasA/MtnC family. Monomer. Requires Mg(2+) as cofactor.

It catalyses the reaction 5-methylsulfanyl-2,3-dioxopentyl phosphate + H2O = 1,2-dihydroxy-5-(methylsulfanyl)pent-1-en-3-one + phosphate. It functions in the pathway amino-acid biosynthesis; L-methionine biosynthesis via salvage pathway; L-methionine from S-methyl-5-thio-alpha-D-ribose 1-phosphate: step 3/6. The protein operates within amino-acid biosynthesis; L-methionine biosynthesis via salvage pathway; L-methionine from S-methyl-5-thio-alpha-D-ribose 1-phosphate: step 4/6. Bifunctional enzyme that catalyzes the enolization of 2,3-diketo-5-methylthiopentyl-1-phosphate (DK-MTP-1-P) into the intermediate 2-hydroxy-3-keto-5-methylthiopentenyl-1-phosphate (HK-MTPenyl-1-P), which is then dephosphorylated to form the acireductone 1,2-dihydroxy-3-keto-5-methylthiopentene (DHK-MTPene). The sequence is that of Enolase-phosphatase E1 from Aquifex aeolicus (strain VF5).